Consider the following 119-residue polypeptide: Large ribosomal subunit protein bL20c (119 aa).

Belongs to the bacterial ribosomal protein bL20 family.

It localises to the plastid. It is found in the chloroplast. Binds directly to 23S ribosomal RNA and is necessary for the in vitro assembly process of the 50S ribosomal subunit. It is not involved in the protein synthesizing functions of that subunit. This chain is Large ribosomal subunit protein bL20c, found in Saccharum officinarum (Sugarcane).